The chain runs to 232 residues: Chaperone protein CssC (232 aa).

The signal sequence occupies residues 1–20 (MKSKLIILLTLVPFSSFSTG).

This sequence belongs to the periplasmic pilus chaperone family.

Its subcellular location is the periplasm. In terms of biological role, involved in the biogenesis of the CS6 fimbria. The chain is Chaperone protein CssC (cssC) from Escherichia coli.